Reading from the N-terminus, the 410-residue chain is Protein translocase subunit SecY (410 aa).

9 helical membrane passes run 61 to 81 (LSVF…IQIL), 106 to 126 (ITKY…VLRL), 135 to 155 (LYFI…VMWL), 170 to 190 (VIIF…QLFV), 195 to 215 (FLDF…IVFV), 248 to 268 (QGGV…DYVI), 289 to 309 (ILFL…YCSL), 349 to 369 (LFGS…EFVF), and 373 to 393 (VFKG…IDLI).

It belongs to the SecY/SEC61-alpha family. As to quaternary structure, component of the plastid Sec protein translocase complex, which is composed of at least SecY and SecE.

It is found in the plastid. It localises to the chloroplast thylakoid membrane. Its function is as follows. The central subunit of the protein translocation channel SecYE. Consists of two halves formed by TMs 1-5 and 6-10. These two domains form a lateral gate at the front which open onto the bilayer between TMs 2 and 7, and are clamped together by SecE at the back. The channel is closed by both a pore ring composed of hydrophobic SecY resides and a short helix (helix 2A) on the extracellular side of the membrane which forms a plug. This Cyanidium caldarium (Red alga) protein is Protein translocase subunit SecY.